A 371-amino-acid chain; its full sequence is MRPIEKFFTENAPDSDLVIEKVIEFGIDFLGGEWKNVKKNEVKVTTILGGQSNHMFHVTSSTSATPYLLRIHRQGPSHVFMDTVNFAIFSERGLGPKLYGFFDGGRMEEFLPSRTLDSDCILDPEISRRVGAVYPKYHAIDVPVSKKRRCFQVMRESLKEYQDLGGGDYEIKPTTVTYSEHPKKISMDDLYKEIDFMEKWTNELFEDTVVFCHNDLASSNILELNSTKELVLIDWEFGSYNCRGFDLAMHLAETAADFRDSTPPGIRISEELTDNPPNLQGFCEAYVDADNKLKNRVPSNRDLEVSNLICECQFFWPITQLFWACFVMKLALLKYNCGVDMDVQAQDRFAVYWHLKERTRKIYEDLKKGTC.

The protein belongs to the choline/ethanolamine kinase family. Mg(2+) is required as a cofactor.

It catalyses the reaction choline + ATP = phosphocholine + ADP + H(+). In Caenorhabditis elegans, this protein is Choline kinase B1 (ckb-1).